The chain runs to 351 residues: RCC1 repeat-containing protein C10F6.04 (351 aa).

RCC1 repeat units follow at residues 1–48 (MLLS…LLDE), 50–106 (SQLW…IVHA), 108–162 (RRRV…CVTN), and 163–212 (EGNL…VLQE).

It localises to the cytoplasm. The protein resides in the nucleus. This chain is RCC1 repeat-containing protein C10F6.04, found in Schizosaccharomyces pombe (strain 972 / ATCC 24843) (Fission yeast).